A 483-amino-acid polypeptide reads, in one-letter code: Glutamate--tRNA ligase (483 aa).

The short motif at 9-19 is the 'HIGH' region element; that stretch reads PSPTGFLHIGN. The 'KMSKS' region motif lies at 253–257; sequence KLSKR. ATP is bound at residue Lys-256.

The protein belongs to the class-I aminoacyl-tRNA synthetase family. Glutamate--tRNA ligase type 1 subfamily. In terms of assembly, monomer.

The protein localises to the cytoplasm. The enzyme catalyses tRNA(Glu) + L-glutamate + ATP = L-glutamyl-tRNA(Glu) + AMP + diphosphate. In terms of biological role, catalyzes the attachment of glutamate to tRNA(Glu) in a two-step reaction: glutamate is first activated by ATP to form Glu-AMP and then transferred to the acceptor end of tRNA(Glu). This is Glutamate--tRNA ligase from Mycoplasma mycoides subsp. mycoides SC (strain CCUG 32753 / NCTC 10114 / PG1).